The primary structure comprises 473 residues: Ribulose bisphosphate carboxylase large chain (473 aa).

A propeptide spanning residues 1–2 (MS) is cleaved from the precursor. Proline 3 is modified (N-acetylproline). Lysine 14 bears the N6,N6,N6-trimethyllysine mark. Asparagine 123 and threonine 173 together coordinate substrate. The active-site Proton acceptor is the lysine 175. Lysine 177 contacts substrate. Positions 201, 203, and 204 each coordinate Mg(2+). Lysine 201 carries the N6-carboxylysine modification. The Proton acceptor role is filled by histidine 294. Positions 295, 327, and 379 each coordinate substrate.

The protein belongs to the RuBisCO large chain family. Type I subfamily. Heterohexadecamer of 8 large chains and 8 small chains; disulfide-linked. The disulfide link is formed within the large subunit homodimers. Mg(2+) serves as cofactor. Post-translationally, the disulfide bond which can form in the large chain dimeric partners within the hexadecamer appears to be associated with oxidative stress and protein turnover.

It is found in the plastid. The protein resides in the chloroplast. The enzyme catalyses 2 (2R)-3-phosphoglycerate + 2 H(+) = D-ribulose 1,5-bisphosphate + CO2 + H2O. It carries out the reaction D-ribulose 1,5-bisphosphate + O2 = 2-phosphoglycolate + (2R)-3-phosphoglycerate + 2 H(+). Functionally, ruBisCO catalyzes two reactions: the carboxylation of D-ribulose 1,5-bisphosphate, the primary event in carbon dioxide fixation, as well as the oxidative fragmentation of the pentose substrate in the photorespiration process. Both reactions occur simultaneously and in competition at the same active site. This chain is Ribulose bisphosphate carboxylase large chain, found in Ajuga chamaepitys (Yellow bugle).